A 564-amino-acid polypeptide reads, in one-letter code: Protein CPR-5 (564 aa).

Residues 1-87 (MEALLLPPSP…TSNSNSTKRV (87 aa)) are disordered. Positions 12 to 28 (PQNQITNPANSKPNHQS) are enriched in polar residues. The segment covering 29 to 38 (GDVHKDETMM) has biased composition (basic and acidic residues). A compositionally biased stretch (low complexity) spans 69-84 (SSSYCSTSSTSNSNST). 5 helical membrane-spanning segments follow: residues 347 to 367 (IMDW…LGVY), 411 to 431 (VRVW…TYFL), 443 to 463 (PISF…KLCV), 472 to 492 (LWLI…VFTL), and 526 to 546 (VYVV…FATF).

As to quaternary structure, interacts with SIM and SMR1. In terms of tissue distribution, ubiquitous.

The protein resides in the membrane. The protein localises to the nucleus membrane. Functionally, may play a role in transcriptional processes. Negatively regulates the senescence and chlorotic lesions induced by biotic (e.g. pathogens) and abiotic (e.g. sugars, darkness) agents, probably by controlling programmed cell death (pcd). Negative regulator of plant programmed cell death (PCD) and effector-triggered immunity (ETI). Promotes cell division and endoreduplication (e.g. in trichomes). This Arabidopsis thaliana (Mouse-ear cress) protein is Protein CPR-5.